A 439-amino-acid chain; its full sequence is NAD kinase (439 aa).

5 positions are modified to phosphoserine: Ser-46, Ser-48, Ser-50, Ser-55, and Ser-64.

This sequence belongs to the NAD kinase family. The cofactor is a divalent metal cation.

It carries out the reaction NAD(+) + ATP = ADP + NADP(+) + H(+). This chain is NAD kinase (Nadk), found in Mus musculus (Mouse).